The primary structure comprises 744 residues: Tripartite motif-containing protein 2 (744 aa).

Residue Ser10 is modified to Phosphoserine. The RING-type zinc-finger motif lies at Cys23–Arg64. The B box-type zinc-finger motif lies at Gly113–Leu154. Positions 118, 121, 141, and 146 each coordinate Zn(2+). The Filamin repeat unit spans residues Thr320–Val421. Thr371 bears the Phosphothreonine mark. Phosphoserine occurs at positions 375, 424, and 428. The interval Glu432–Lys462 is disordered. 6 NHL repeats span residues Ile473–Asp516, Lys520–Asp563, Gly564–Asn605, Val609–Glu652, Met656–Ser699, and Gly700–Leu743.

The protein belongs to the TRIM/RBCC family. Forms homooligomers. Interacts with TRIM3; this interaction reduces TRIM2 activity. Interacts with myosin V; myosin V may not be a substrate for ubiquitination. Interacts with NEFL. Interacts with phosphorylated BCL2L11. Interacts with SIRPA. Post-translationally, RING-type zinc finger-dependent and UBE2D1-dependent autoubiquitination.

It localises to the cytoplasm. It catalyses the reaction S-ubiquitinyl-[E2 ubiquitin-conjugating enzyme]-L-cysteine + [acceptor protein]-L-lysine = [E2 ubiquitin-conjugating enzyme]-L-cysteine + N(6)-ubiquitinyl-[acceptor protein]-L-lysine.. Its pathway is protein modification; protein ubiquitination. UBE2D1-dependent E3 ubiquitin-protein ligase that mediates the ubiquitination of NEFL and of phosphorylated BCL2L11. Plays a neuroprotective function. May play a role in neuronal rapid ischemic tolerance. Plays a role in antiviral immunity and limits New World arenavirus infection independently of its ubiquitin ligase activity. This chain is Tripartite motif-containing protein 2 (TRIM2), found in Homo sapiens (Human).